Consider the following 512-residue polypeptide: Sucrose transport protein SUC2 (512 aa).

At 1-31 the chain is on the cytoplasmic side; the sequence is MVSHPMEKAANGASALETQTGELDQPERLRK. The helical transmembrane segment at 32–52 threads the bilayer; sequence IISVSSIAAGVQFGWALQLSL. Residues 53 to 65 lie on the Extracellular side of the membrane; that stretch reads LTPYVQLLGIPHK. Residues 66–86 traverse the membrane as a helical segment; it reads WASLIWLCGPISGMLVQPIVG. The Cytoplasmic portion of the chain corresponds to 87-100; that stretch reads YHSDRCTSRFGRRR. Residues 101–121 traverse the membrane as a helical segment; it reads PFIVAGAGLVTVAVFLIGYAA. At 122–138 the chain is on the extracellular side; the sequence is DIGHSMGDQLDKPPKTR. A helical membrane pass occupies residues 139–159; the sequence is AIAIFALGFWILDVANNTLQG. Residues 160 to 177 lie on the Cytoplasmic side of the membrane; that stretch reads PCRAFLADLSAGNAKKTR. A helical transmembrane segment spans residues 178-198; the sequence is TANAFFSFFMAVGNVLGYAAG. Residues 199 to 223 are Extracellular-facing; it reads SYRNLYKVVPFTMTESCDLYCANLK. Residues 224–244 traverse the membrane as a helical segment; sequence TCFFLSITLLLIVTFVSLCYV. Residues 245 to 278 lie on the Cytoplasmic side of the membrane; sequence KEKPWTPEPTADGKASNVPFFGEIFGAFKELKRP. The chain crosses the membrane as a helical span at residues 279–299; that stretch reads MWMLLIVTALNWIAWFPFLLF. The Extracellular segment spans residues 300–332; the sequence is DTDWMGREVYGGNSDATATAASKKLYNDGVRAG. The helical transmembrane segment at 333 to 353 threads the bilayer; the sequence is ALGLMLNAIVLGFMSLGVEWI. At 354–362 the chain is on the cytoplasmic side; sequence GRKLGGAKR. A helical membrane pass occupies residues 363–383; that stretch reads LWGIVNFILAICLAMTVVVTK. Residues 384-407 lie on the Extracellular side of the membrane; the sequence is QAENHRRDHGGAKTGPPGNVTAGA. Asparagine 402 carries N-linked (GlcNAc...) asparagine glycosylation. The chain crosses the membrane as a helical span at residues 408-428; sequence LTLFAILGIPQAITFSIPFAL. The Cytoplasmic portion of the chain corresponds to 429-440; the sequence is ASIFSTNSGAGQ. Residues 441-461 traverse the membrane as a helical segment; the sequence is GLSLGVLNLAIVVPQMVISVG. The Extracellular segment spans residues 462 to 473; the sequence is GGPFDELFGGGN. A helical membrane pass occupies residues 474-494; sequence IPAFVLGAIAAAVSGVLALTV. The Cytoplasmic portion of the chain corresponds to 495-512; the sequence is LPSPPPDAPAFKATMGFH.

Belongs to the glycoside-pentoside-hexuronide (GPH) cation symporter transporter (TC 2.A.2.4) family. In terms of assembly, homodimer. Interacts with SUC3 and SUC4. As to expression, expressed in leaves and, to a lower extent, in roots, flowers and stems. Highly specific to the phloem, exclusively localized in companion cells (at protein level).

It localises to the cell membrane. It carries out the reaction sucrose(out) + H(+)(out) = sucrose(in) + H(+)(in). It participates in glycan biosynthesis; sucrose metabolism. Inhibited by protonophores (e.g. dinitrophenol and carbonyl cyanide m-chlorophenyl-hydrazone (CCCP)) and SH group inhibitors (e.g. N-ethylmaleimide (NEM) and p-chloromercuriphenyl sulphonic acid (PCMPS)). In terms of biological role, responsible for the transport of sucrose into the cell, with the concomitant uptake of protons (symport system). Can also transport other glucosides such as maltose, arbutin (hydroquinone-beta-D-glucoside), salicin (2-(hydroxymethyl)phenyl-beta-D-glucoside), alpha-phenylglucoside, beta-phenylglucoside, alpha-paranitrophenylglucoside, beta-paranitrophenylglucoside, and paranitrophenyl-beta-thioglucoside. May also transport biotin. Required for apoplastic phloem sucrose loading in source tissues (e.g. leaves) in order to transport it to sink tissues (e.g. roots, flowers). The chain is Sucrose transport protein SUC2 from Arabidopsis thaliana (Mouse-ear cress).